A 1004-amino-acid polypeptide reads, in one-letter code: Protein Wnt-5 (1004 aa).

The signal sequence occupies residues 1-29; sequence MSCYRKRHFLLWLLRAVCMLHLTARGAYA. N-linked (GlcNAc...) asparagine glycans are attached at residues Asn60, Asn66, Asn115, and Asn219. A disordered region spans residues 238–298; it reads QKDKAKTSGA…NPGEQPIGGY (61 aa). 2 N-linked (GlcNAc...) asparagine glycosylation sites follow: Asn307 and Asn341. Residues 310–407 are disordered; it reads LLKPTDTDSH…ERDEWFRGQS (98 aa). A compositionally biased stretch (basic and acidic residues) spans 389–403; it reads RREEQQRQRERDEWF. N-linked (GlcNAc...) asparagine glycosylation is present at Asn422. The disordered stretch occupies residues 438-472; sequence KVSSEGSDGELLSRVERSQPSISSSSSSSSSSSRK. Residues 458 to 470 show a composition bias toward low complexity; that stretch reads SISSSSSSSSSSS. N-linked (GlcNAc...) asparagine glycans are attached at residues Asn484, Asn485, Asn528, and Asn593. Disulfide bonds link Cys583–Cys594, Cys633–Cys641, and Cys643–Cys661. Asn724 is a glycosylation site (N-linked (GlcNAc...) asparagine). The interval 790–822 is disordered; that stretch reads FFKGEQQPRKKKRKNQRAAADAPAYPRNGIKES. 8 disulfides stabilise this stretch: Cys862-Cys876, Cys864-Cys871, Cys933-Cys964, Cys949-Cys959, Cys963-Cys1003, Cys979-Cys994, Cys981-Cys991, and Cys986-Cys987. The O-palmitoleoyl serine; by PORCN moiety is linked to residue Ser868. Residue Asn952 is glycosylated (N-linked (GlcNAc...) asparagine).

Belongs to the Wnt family. Interacts with porcupine (por). In terms of processing, glycosylated, glycosylation is stimulated by porcupine at the ER. Post-translationally, palmitoleoylated by porcupine. The lipid group functions as a sorting signal, targeting the ligand to polarized vesicles that transport Wnt5 to unique sites at the cell surface. Depalmitoleoylated by notum, leading to inhibit Wnt signaling pathway. In terms of tissue distribution, dynamic expression pattern during embryogenesis. Expression is seen in the limb primordia of the head and thoracic segments, mesodermal and neurogenic regions.

It is found in the secreted. The protein resides in the extracellular space. Its subcellular location is the extracellular matrix. Binds as a ligand to a family of frizzled seven-transmembrane receptors and acts through a cascade of genes on the nucleus. Probable developmental protein. May be a signaling molecule which affects the development of discrete regions of tissues. Is likely to signal over only few cell diameters. May have a role in limb and CNS development; may be a downstream target of Dll that acts in the specification of these primordia. The sequence is that of Protein Wnt-5 (Wnt5) from Drosophila melanogaster (Fruit fly).